The primary structure comprises 364 residues: Pyrimidine monooxygenase RutA (364 aa).

Residues 49–50 (IK), Asn115, Glu124, 140–141 (RY), and Ser190 each bind FMN.

The protein belongs to the NtaA/SnaA/DszA monooxygenase family. RutA subfamily.

It catalyses the reaction uracil + FMNH2 + NADH + O2 = (Z)-3-ureidoacrylate + FMN + NAD(+) + H2O + H(+). It carries out the reaction thymine + FMNH2 + NADH + O2 = (Z)-2-methylureidoacrylate + FMN + NAD(+) + H2O + H(+). Functionally, catalyzes the pyrimidine ring opening between N-3 and C-4 by an unusual flavin hydroperoxide-catalyzed mechanism, adding oxygen atoms in the process to yield ureidoacrylate peracid, that immediately reacts with FMN forming ureidoacrylate and FMN-N(5)-oxide. The FMN-N(5)-oxide reacts spontaneously with NADH to produce FMN. Requires the flavin reductase RutF to regenerate FMN in vivo. The protein is Pyrimidine monooxygenase RutA of Methylorubrum extorquens (strain ATCC 14718 / DSM 1338 / JCM 2805 / NCIMB 9133 / AM1) (Methylobacterium extorquens).